Here is a 491-residue protein sequence, read N- to C-terminus: Glutamyl-tRNA(Gln) amidotransferase subunit A (491 aa).

Active-site charge relay system residues include K77 and S152. The active-site Acyl-ester intermediate is the S176.

Belongs to the amidase family. GatA subfamily. As to quaternary structure, heterotrimer of A, B and C subunits.

The catalysed reaction is L-glutamyl-tRNA(Gln) + L-glutamine + ATP + H2O = L-glutaminyl-tRNA(Gln) + L-glutamate + ADP + phosphate + H(+). Its function is as follows. Allows the formation of correctly charged Gln-tRNA(Gln) through the transamidation of misacylated Glu-tRNA(Gln) in organisms which lack glutaminyl-tRNA synthetase. The reaction takes place in the presence of glutamine and ATP through an activated gamma-phospho-Glu-tRNA(Gln). In Chlamydia trachomatis serovar L2 (strain ATCC VR-902B / DSM 19102 / 434/Bu), this protein is Glutamyl-tRNA(Gln) amidotransferase subunit A.